We begin with the raw amino-acid sequence, 523 residues long: Mitochondrial distribution and morphology protein 34 (523 aa).

The 200-residue stretch at 1-200 folds into the SMP-LTD domain; the sequence is MSFKVNWKSL…LPTLIHQFSL (200 aa). The segment at 489–523 is disordered; the sequence is ELSMDRSGKRKQRNYGSATYESENPIVAPPPPYSH.

This sequence belongs to the MDM34 family. Component of the ER-mitochondria encounter structure (ERMES) or MDM complex, composed of MMM1, MDM10, MDM12 and MDM34.

Its subcellular location is the mitochondrion outer membrane. Functionally, component of the ERMES/MDM complex, which serves as a molecular tether to connect the endoplasmic reticulum (ER) and mitochondria. Components of this complex are involved in the control of mitochondrial shape and protein biogenesis, and function in nonvesicular lipid trafficking between the ER and mitochondria. MDM34 is required for the interaction of the ER-resident membrane protein MMM1 and the outer mitochondrial membrane-resident beta-barrel protein MDM10. This Scheffersomyces stipitis (strain ATCC 58785 / CBS 6054 / NBRC 10063 / NRRL Y-11545) (Yeast) protein is Mitochondrial distribution and morphology protein 34.